Here is a 132-residue protein sequence, read N- to C-terminus: Antileukoproteinase (132 aa).

Positions 1 to 25 (MKSSGLFPFLVLLALGTLAPWAVEG) are cleaved as a signal peptide. WAP domains lie at 28 to 76 (KSFK…LDPV) and 82 to 130 (TRRK…VSPV). Intrachain disulfides connect cysteine 35–cysteine 64, cysteine 43–cysteine 68, cysteine 51–cysteine 63, cysteine 57–cysteine 72, cysteine 89–cysteine 118, cysteine 96–cysteine 122, cysteine 105–cysteine 117, and cysteine 111–cysteine 126. The elastase inhibitory domain stretch occupies residues 84-132 (RKPGKCPVTYGQCLMLNPPNFCEMDGQCKRDLKCCMGMCGKSCVSPVKA).

Interacts with GRN; interaction protects progranulin from proteolysis. As to expression, detected in blood plasma. Detected in bone marrow myeloid cells. Detected in airway sputum. Detected in parotid gland secretions. Detected in seminal plasma (at protein level). Detected in uterus cervix.

The protein localises to the secreted. Its function is as follows. Acid-stable proteinase inhibitor with strong affinities for trypsin, chymotrypsin, elastase, and cathepsin G. Modulates the inflammatory and immune responses after bacterial infection, and after infection by the intracellular parasite L.major. Down-regulates responses to bacterial lipopolysaccharide (LPS). Plays a role in regulating the activation of NF-kappa-B and inflammatory responses. Has antimicrobial activity against mycobacteria, but not against salmonella. Contributes to normal resistance against infection by M.tuberculosis. Required for normal resistance to infection by L.major. Required for normal wound healing, probably by preventing tissue damage by limiting protease activity. Together with ELANE, required for normal differentiation and proliferation of bone marrow myeloid cells. The protein is Antileukoproteinase (SLPI) of Homo sapiens (Human).